The chain runs to 281 residues: RAD52 motif-containing protein 1 (281 aa).

The segment at 1–92 (MAELISFVVP…KPLFQTSPVK (92 aa)) is necessary for nuclear localization and for nucleolar accumulation in response to heat shock. Residues 15-98 (KVLLVWDLST…SPVKVRLGTR (84 aa)) form the RRM domain. Residues 90–133 (PVKVRLGTRHKALQHQAFALNSSRCQELANYYFGFSGWSKRIIK) form a necessary for nuclear and nucleolar localization region.

In terms of assembly, homodimer.

Its subcellular location is the nucleus. The protein resides in the cytoplasm. The protein localises to the nucleolus. It localises to the cajal body. It is found in the PML body. May confer resistance to the antitumor agent cisplatin. Binds to DNA and RNA. This is RAD52 motif-containing protein 1 (Rdm1) from Mus musculus (Mouse).